A 262-amino-acid polypeptide reads, in one-letter code: Hydroxyethylthiazole kinase (262 aa).

Methionine 50 is a binding site for substrate. Positions 125 and 171 each coordinate ATP. Glycine 198 lines the substrate pocket.

The protein belongs to the Thz kinase family. It depends on Mg(2+) as a cofactor.

It catalyses the reaction 5-(2-hydroxyethyl)-4-methylthiazole + ATP = 4-methyl-5-(2-phosphooxyethyl)-thiazole + ADP + H(+). It participates in cofactor biosynthesis; thiamine diphosphate biosynthesis; 4-methyl-5-(2-phosphoethyl)-thiazole from 5-(2-hydroxyethyl)-4-methylthiazole: step 1/1. Functionally, catalyzes the phosphorylation of the hydroxyl group of 4-methyl-5-beta-hydroxyethylthiazole (THZ). The chain is Hydroxyethylthiazole kinase from Escherichia coli O17:K52:H18 (strain UMN026 / ExPEC).